The primary structure comprises 362 residues: Probable dual-specificity RNA methyltransferase RlmN (362 aa).

Glutamate 91 acts as the Proton acceptor in catalysis. The Radical SAM core domain maps to 97–329 (QHYGLSVCVT…KKNGVNCVVR (233 aa)). Residues cysteine 104 and cysteine 340 are joined by a disulfide bond. Positions 111, 115, and 118 each coordinate [4Fe-4S] cluster. S-adenosyl-L-methionine-binding positions include 163-164 (GE), serine 195, 218-220 (SLH), and asparagine 296. The active-site S-methylcysteine intermediate is the cysteine 340.

This sequence belongs to the radical SAM superfamily. RlmN family. [4Fe-4S] cluster serves as cofactor.

Its subcellular location is the cytoplasm. It carries out the reaction adenosine(2503) in 23S rRNA + 2 reduced [2Fe-2S]-[ferredoxin] + 2 S-adenosyl-L-methionine = 2-methyladenosine(2503) in 23S rRNA + 5'-deoxyadenosine + L-methionine + 2 oxidized [2Fe-2S]-[ferredoxin] + S-adenosyl-L-homocysteine. The catalysed reaction is adenosine(37) in tRNA + 2 reduced [2Fe-2S]-[ferredoxin] + 2 S-adenosyl-L-methionine = 2-methyladenosine(37) in tRNA + 5'-deoxyadenosine + L-methionine + 2 oxidized [2Fe-2S]-[ferredoxin] + S-adenosyl-L-homocysteine. Functionally, specifically methylates position 2 of adenine 2503 in 23S rRNA and position 2 of adenine 37 in tRNAs. This is Probable dual-specificity RNA methyltransferase RlmN from Streptococcus gordonii (strain Challis / ATCC 35105 / BCRC 15272 / CH1 / DL1 / V288).